The following is a 370-amino-acid chain: Heme A synthase (370 aa).

8 consecutive transmembrane segments (helical) span residues 15–35, 104–124, 129–149, 161–181, 200–220, 261–280, 293–313, and 317–337; these read VRIWLTLVAALIAVMVLVGGA, VIGIVYLLPFLWFLWRGAIGP, ALWIIFALGALQGAVGWWMVA, VRLATHLSLALIIYAAIVWTL, ALALLGLTFVQLYAGALVAGL, QFDHRMLAYALWTLAALHMI, GAVLLFLALTVQAALGIFTVL, and PIDLALAHQAMALVVLTLAVL. A heme-binding site is contributed by His-264. Residue His-324 coordinates heme.

The protein belongs to the COX15/CtaA family. Type 2 subfamily. In terms of assembly, interacts with CtaB. Heme b is required as a cofactor.

It localises to the cell membrane. It catalyses the reaction Fe(II)-heme o + 2 A + H2O = Fe(II)-heme a + 2 AH2. It functions in the pathway porphyrin-containing compound metabolism; heme A biosynthesis; heme A from heme O: step 1/1. Its function is as follows. Catalyzes the conversion of heme O to heme A by two successive hydroxylations of the methyl group at C8. The first hydroxylation forms heme I, the second hydroxylation results in an unstable dihydroxymethyl group, which spontaneously dehydrates, resulting in the formyl group of heme A. This Rhodopseudomonas palustris (strain TIE-1) protein is Heme A synthase.